The following is an 838-amino-acid chain: uncharacterized protein (838 aa).

This is an uncharacterized protein from Rickettsia conorii (strain ATCC VR-613 / Malish 7).